A 215-amino-acid polypeptide reads, in one-letter code: Cytochrome b6 (215 aa).

Residues 32 to 52 (IFYCLGGITLTCFLVQVASGF) traverse the membrane as a helical segment. Cys-35 provides a ligand contact to heme c. His-86 and His-100 together coordinate heme b. 3 helical membrane passes run 90–110 (ASMMVLMMILHVFRVYLTGGF), 116–136 (LTWVTGVILAVLTVSFGVTGY), and 186–206 (LHTFVLPLLTAVLMLMHFLMI). Heme b contacts are provided by His-187 and His-202.

This sequence belongs to the cytochrome b family. PetB subfamily. As to quaternary structure, the 4 large subunits of the cytochrome b6-f complex are cytochrome b6, subunit IV (17 kDa polypeptide, PetD), cytochrome f and the Rieske protein, while the 4 small subunits are PetG, PetL, PetM and PetN. The complex functions as a dimer. Heme b serves as cofactor. It depends on heme c as a cofactor.

The protein localises to the plastid. The protein resides in the chloroplast thylakoid membrane. Its function is as follows. Component of the cytochrome b6-f complex, which mediates electron transfer between photosystem II (PSII) and photosystem I (PSI), cyclic electron flow around PSI, and state transitions. This is Cytochrome b6 from Anthoceros angustus (Hornwort).